The following is a 266-amino-acid chain: Streptomycin 3''-kinase (266 aa).

Asp154 functions as the Proton acceptor in the catalytic mechanism.

It belongs to the aminoglycoside phosphotransferase family.

The enzyme catalyses streptomycin + ATP = streptomycin 3''-phosphate + ADP + H(+). The aminoglycoside phosphotransferases achieve inactivation of their antibiotic substrates by phosphorylation. The protein is Streptomycin 3''-kinase (str) of Klebsiella pneumoniae.